We begin with the raw amino-acid sequence, 20 residues long: Cytochrome P450IIB (20 aa).

Belongs to the cytochrome P450 family. Requires heme as cofactor.

It is found in the endoplasmic reticulum membrane. Its subcellular location is the microsome membrane. It carries out the reaction an organic molecule + reduced [NADPH--hemoprotein reductase] + O2 = an alcohol + oxidized [NADPH--hemoprotein reductase] + H2O + H(+). Cytochromes P450 are a group of heme-thiolate monooxygenases. In liver microsomes, this enzyme is involved in an NADPH-dependent electron transport pathway. This isozyme is active upon P.nitroanisole, aniline, D-benzphetamine, delta(9)-tetrahydrocannabinol (THC) and strychnine. This is Cytochrome P450IIB from Cavia porcellus (Guinea pig).